The primary structure comprises 201 residues: Small ribosomal subunit protein uS4c (201 aa).

Residues 89-150 (MRLDNILFRL…KQRSKVLIQN (62 aa)) form the S4 RNA-binding domain.

The protein belongs to the universal ribosomal protein uS4 family. In terms of assembly, part of the 30S ribosomal subunit. Contacts protein S5. The interaction surface between S4 and S5 is involved in control of translational fidelity.

The protein localises to the plastid. It is found in the chloroplast. One of the primary rRNA binding proteins, it binds directly to 16S rRNA where it nucleates assembly of the body of the 30S subunit. Its function is as follows. With S5 and S12 plays an important role in translational accuracy. This is Small ribosomal subunit protein uS4c (rps4) from Acorus calamus (Sweet flag).